The chain runs to 189 residues: CASP-like protein 1U2 (189 aa).

The Cytoplasmic portion of the chain corresponds to 1–24 (MFGSDDSGCHVMDDDVAPPANGSK). The chain crosses the membrane as a helical span at residues 25 to 45 (AVTLLLRLITLALALTSAVLM). Residues 46–71 (ATASECTIYGLDGATATTVTFKDYQP) lie on the Extracellular side of the membrane. Residues 72–92 (FIYLVGSNIAATILEVAAIYV) traverse the membrane as a helical segment. The Cytoplasmic portion of the chain corresponds to 93–109 (QVGKGDDVEDAPMIPRV). The helical transmembrane segment at 110 to 130 (VLVVVDVAVQMLLYSATGAVF) threads the bilayer. Residues 131 to 158 (AAVMAYGPQISACTGAAGHFCEQVQRSK) lie on the Extracellular side of the membrane. Residues 159 to 179 (IISLAASLSAVLAAVAKDVAL) traverse the membrane as a helical segment. Over 180–189 (PCSVWPHPSS) the chain is Cytoplasmic.

The protein belongs to the Casparian strip membrane proteins (CASP) family. Homodimer and heterodimers.

It is found in the cell membrane. This Sorghum bicolor (Sorghum) protein is CASP-like protein 1U2.